The following is a 617-amino-acid chain: Protein DWARF AND LOW-TILLERING (617 aa).

2 disordered regions span residues 29–92 and 159–206; these read KRGS…HDED and PSLA…GVPA. Low complexity predominate over residues 171-187; sequence KSPSDSSSSSGTDGGSS. A GRAS domain is found at 208-594; that stretch reads GQAEREALEL…QPLYTVTAWT (387 aa). A leucine repeat I (LRI) region spans residues 215–295; the sequence is LELVRALTAC…LTDDAFGGGD (81 aa). The tract at residues 301–366 is VHIID; that stretch reads LRILNAITPI…VPPAHVRITG (66 aa). A VHIID motif is present at residues 332-336; it reads VHVID. Residues 376 to 408 are leucine repeat II (LRII); that stretch reads ETGARLARVAAALGLAFEFHAVVDRLEDVRLWM. Residues 417 to 508 are PFYRE; sequence VAVNCVLAMH…EEMFAREIRN (92 aa). The SAW stretch occupies residues 511–594; sequence AFEGPERFER…QPLYTVTAWT (84 aa). The disordered stretch occupies residues 596–617; sequence AGDGAGGSTVSASTTASHSQQS. Residues 603–617 are compositionally biased toward low complexity; that stretch reads STVSASTTASHSQQS.

It belongs to the GRAS family. In terms of assembly, interacts with GSK2. Interacts with SMOS1 (via C-terminus). Phosphorylated on serine and threonine residues by GSK2. Dephosphorylated during response to brassinosteroid. As to expression, expressed in the shoot apical meristem (SAM) and elongating cells of young seedlings. Expressed in leaf joints, culms, internodes, stems, young panicles, primary roots and lateral roots.

Its subcellular location is the nucleus. Probable transcription factor that acts as a positive regulator of brassinosteroid (BR) signaling. Functions downstream of BRI1 and GSK2 to modulate BR responses. Acts as a direct target of GSK2 kinase to mediate BR responses. Involved in feedback inhibition of BR biosynthetic genes. Repressed by BZR1. Cooperatively functions in a transactivating complex with SMOS1 to enhance the transcription of the SMOS1 target PHI-1, and regulate plant organ size. Interaction between SMOS1 and DLT is a crosstalk point for auxin and brassinosteroid signaling. The protein is Protein DWARF AND LOW-TILLERING of Oryza sativa subsp. japonica (Rice).